Reading from the N-terminus, the 196-residue chain is MDLQKLHELIKNCDKCPLHKYRKNAVPGEGEMKLGVMIVGEAPGASEDEAGRPFVGAAGQLLTEALSRLGVRRGDVFITNVVKCRPPNNRTPNREEVEACLPYLIQQIGILKPRRIIALGLISAKALMELMGRRAEKLGDVKGKCYQGRIAGVQVELCITYHPAAVLRKPALRGEFQKDLAMFFGGGLDRFLDPSK.

[4Fe-4S] cluster is bound by residues Cys13 and Cys16. Residues 40–42, Phe54, and Asn80 contribute to the uracil site; that span reads GEA. Residues Cys84 and Cys100 each coordinate [4Fe-4S] cluster. His162 is a binding site for uracil.

The protein belongs to the uracil-DNA glycosylase (UDG) superfamily. Type 4 (UDGa) family.

It catalyses the reaction Hydrolyzes single-stranded DNA or mismatched double-stranded DNA and polynucleotides, releasing free uracil.. Functionally, removes uracil bases that are present in DNA as a result of either deamination of cytosine or misincorporation of dUMP instead of dTMP. Can remove uracil from double-stranded DNA containing either a U/G or U/A base pair as well as from single-stranded DNA. The polypeptide is Type-4 uracil-DNA glycosylase (Pyrobaculum aerophilum (strain ATCC 51768 / DSM 7523 / JCM 9630 / CIP 104966 / NBRC 100827 / IM2)).